The chain runs to 426 residues: Molybdopterin molybdenumtransferase 1 (426 aa).

The protein belongs to the MoeA family. Mg(2+) is required as a cofactor.

The enzyme catalyses adenylyl-molybdopterin + molybdate = Mo-molybdopterin + AMP + H(+). Its pathway is cofactor biosynthesis; molybdopterin biosynthesis. Its function is as follows. Catalyzes the insertion of molybdate into adenylated molybdopterin with the concomitant release of AMP. The chain is Molybdopterin molybdenumtransferase 1 (moeA1) from Mycobacterium tuberculosis (strain ATCC 25618 / H37Rv).